The sequence spans 350 residues: Uroporphyrinogen decarboxylase (350 aa).

Residues 28-32 (RQAGR), Asp-78, Tyr-155, Ser-210, and His-325 each bind substrate.

Belongs to the uroporphyrinogen decarboxylase family. In terms of assembly, homodimer.

The protein localises to the cytoplasm. The catalysed reaction is uroporphyrinogen III + 4 H(+) = coproporphyrinogen III + 4 CO2. The protein operates within porphyrin-containing compound metabolism; protoporphyrin-IX biosynthesis; coproporphyrinogen-III from 5-aminolevulinate: step 4/4. Its function is as follows. Catalyzes the decarboxylation of four acetate groups of uroporphyrinogen-III to yield coproporphyrinogen-III. The sequence is that of Uroporphyrinogen decarboxylase from Trichormus variabilis (strain ATCC 29413 / PCC 7937) (Anabaena variabilis).